The sequence spans 176 residues: Peptidyl-prolyl cis-trans isomerase cyp6 (176 aa).

In terms of domain architecture, PPIase cyclophilin-type spans 10–173 (FFDIAVNGQH…AKIEITDCGE (164 aa)).

Belongs to the cyclophilin-type PPIase family.

The catalysed reaction is [protein]-peptidylproline (omega=180) = [protein]-peptidylproline (omega=0). Functionally, PPIases accelerate the folding of proteins. It catalyzes the cis-trans isomerization of proline imidic peptide bonds in oligopeptides. The chain is Peptidyl-prolyl cis-trans isomerase cyp6 (cyp6) from Rhizopus delemar (strain RA 99-880 / ATCC MYA-4621 / FGSC 9543 / NRRL 43880) (Mucormycosis agent).